Reading from the N-terminus, the 60-residue chain is Large ribosomal subunit protein bL32 (60 aa).

The segment covering 1 to 23 has biased composition (basic residues); the sequence is MAKHPVPKKKTSKSKRDMRRSHH. Residues 1-34 are disordered; it reads MAKHPVPKKKTSKSKRDMRRSHHALTAPNLTECP. Positions 33, 36, 46, and 49 each coordinate Zn(2+). A C4-type zinc finger spans residues 33 to 49; that stretch reads CPQCHGKKLSHHICPNC.

Belongs to the bacterial ribosomal protein bL32 family. Part of the 50S ribosomal subunit. Contacts proteins L17 and L22. The cofactor is Zn(2+).

In terms of biological role, forms a cluster with L17 and L22, and with L22, a pair of 'tweezers' that hold together all the domains of the 23S rRNA. Interacts with the antibiotic troleandomycin which blocks the peptide exit tunnel. This Deinococcus radiodurans (strain ATCC 13939 / DSM 20539 / JCM 16871 / CCUG 27074 / LMG 4051 / NBRC 15346 / NCIMB 9279 / VKM B-1422 / R1) protein is Large ribosomal subunit protein bL32 (rpmF).